Here is a 202-residue protein sequence, read N- to C-terminus: Peptide methionine sulfoxide reductase A3 (202 aa).

A disordered region spans residues 1–34 (MNILNRLGLGSSGQTNMDPSPIAQGNDDDTPAPG). Residue S189 is modified to Phosphoserine.

Belongs to the MsrA Met sulfoxide reductase family. In terms of tissue distribution, expressed in rosette and cauline leaves, and at lower levels in roots, stems and flowers (at protein level).

It is found in the cytoplasm. Its subcellular location is the cytosol. The enzyme catalyses L-methionyl-[protein] + [thioredoxin]-disulfide + H2O = L-methionyl-(S)-S-oxide-[protein] + [thioredoxin]-dithiol. It carries out the reaction [thioredoxin]-disulfide + L-methionine + H2O = L-methionine (S)-S-oxide + [thioredoxin]-dithiol. Catalyzes the reduction of methionine sulfoxide (MetSO) to methionine in proteins. Plays a protective role against oxidative stress by restoring activity to proteins that have been inactivated by methionine oxidation. May prevent cellular oxidative damage due to light exposure. MSRA family specifically reduces the MetSO S-enantiomer. The protein is Peptide methionine sulfoxide reductase A3 (MSRA3) of Arabidopsis thaliana (Mouse-ear cress).